A 432-amino-acid chain; its full sequence is Tyrosine-protein phosphatase non-receptor type 1 (432 aa).

At Met1 the chain carries N-acetylmethionine. Positions 3–277 (MEKEFEEIDK…RFSYLAVIEG (275 aa)) constitute a Tyrosine-protein phosphatase domain. At Tyr20 the chain carries Phosphotyrosine. Ser50 carries the phosphoserine; by CLK1, CLK2 and PKB/AKT1 or PKB/AKT2 modification. At Tyr66 the chain carries Phosphotyrosine; by EGFR. Substrate is bound by residues Asp181 and 215–221 (CSAGIGR). The active-site Phosphocysteine intermediate is the Cys215. The residue at position 215 (Cys215) is a Cysteine persulfide. Cys215 carries the S-nitrosocysteine; in reversibly inhibited form modification. Phosphoserine; by CLK1 and CLK2 is present on residues Ser242 and Ser243. Substrate is bound at residue Gln262. Disordered stretches follow at residues 297–322 (EDLD…PHNG) and 335–399 (SEET…EEHK). 3 positions are modified to phosphoserine: Ser335, Ser362, and Ser364. Residues 354 to 364 (SSAMHSVSSMS) are compositionally biased toward low complexity. A Phosphothreonine modification is found at Thr367.

It belongs to the protein-tyrosine phosphatase family. Non-receptor class 1 subfamily. As to quaternary structure, interacts with EPHA3 (phosphorylated); dephosphorylates EPHA3 and may regulate its trafficking and function. Interacts with MET. Interacts with NCK1. In terms of processing, ser-50 is the major site of phosphorylation as compared to Ser-242 and Ser-243. Activated by phosphorylation at Ser-50. Post-translationally, S-nitrosylation of Cys-215 inactivates the enzyme activity. Sulfhydration at Cys-215 following endoplasmic reticulum stress inactivates the enzyme activity, promoting EIF2AK3/PERK activity. In terms of tissue distribution, most abundant in testis. Also found in kidney, spleen, muscle, liver, heart and brain.

The protein resides in the endoplasmic reticulum membrane. The enzyme catalyses O-phospho-L-tyrosyl-[protein] + H2O = L-tyrosyl-[protein] + phosphate. Its function is as follows. Tyrosine-protein phosphatase which acts as a regulator of endoplasmic reticulum unfolded protein response. Mediates dephosphorylation of EIF2AK3/PERK; inactivating the protein kinase activity of EIF2AK3/PERK. May play an important role in CKII- and p60c-src-induced signal transduction cascades. May regulate the EFNA5-EPHA3 signaling pathway which modulates cell reorganization and cell-cell repulsion. May also regulate the hepatocyte growth factor receptor signaling pathway through dephosphorylation of MET. The polypeptide is Tyrosine-protein phosphatase non-receptor type 1 (Ptpn1) (Mus musculus (Mouse)).